A 525-amino-acid polypeptide reads, in one-letter code: Glucans biosynthesis protein G (525 aa).

Residues 1–35 (MIFRSVSNTDFRARVRTLLLAGSTALAFVAAPVWA) form the signal peptide.

The protein belongs to the OpgD/OpgG family.

It localises to the periplasm. Its pathway is glycan metabolism; osmoregulated periplasmic glucan (OPG) biosynthesis. Involved in the biosynthesis of osmoregulated periplasmic glucans (OPGs). This Pseudomonas paraeruginosa (strain DSM 24068 / PA7) (Pseudomonas aeruginosa (strain PA7)) protein is Glucans biosynthesis protein G.